A 137-amino-acid polypeptide reads, in one-letter code: LVAVCVSLLGAANIPPQPLNLQQFKNMIQCAGTRTWTAYINYGCYCGKGGSGTPVDKLDRCCYTHDHCYNQADSIPGCNPNIKTYSYTCTQPNITCTRTADACAKFLCDCDRTAAICFASAPYNINNIMISASNSCQ.

The first 11 residues, leucine 1–alanine 11, serve as a signal peptide directing secretion. A propeptide spanning residues alanine 12–leucine 19 is cleaved from the precursor. Disulfide bonds link cysteine 30-cysteine 89, cysteine 44-cysteine 136, cysteine 46-cysteine 62, cysteine 61-cysteine 117, cysteine 68-cysteine 110, cysteine 78-cysteine 103, and cysteine 96-cysteine 108. Ca(2+)-binding residues include tyrosine 45, glycine 47, and glycine 49. Residue histidine 65 is part of the active site. Aspartate 66 is a Ca(2+) binding site. Aspartate 111 is a catalytic residue.

It belongs to the phospholipase A2 family. Group I subfamily. D49 sub-subfamily. Monomer, or homotrimer. Was firstly described as a trimer, but has been reinterpreted with the possibility of being a monomer. Ca(2+) serves as cofactor. In terms of tissue distribution, expressed by the venom gland.

Its subcellular location is the secreted. It carries out the reaction a 1,2-diacyl-sn-glycero-3-phosphocholine + H2O = a 1-acyl-sn-glycero-3-phosphocholine + a fatty acid + H(+). In terms of biological role, snake venom phospholipase A2 (PLA2) that shows anticoagulant and neurotoxic activities. PLA2 catalyzes the calcium-dependent hydrolysis of the 2-acyl groups in 3-sn-phosphoglycerides. The polypeptide is Basic phospholipase A2 3 (Bungarus caeruleus (Indian krait)).